The chain runs to 283 residues: Extracellular metalloprotease MGG_08041 (283 aa).

Residues 1–22 form the signal peptide; that stretch reads MQINVVKTFLFALAASSVSALA. The N-linked (GlcNAc...) asparagine glycan is linked to Asn55. His197 provides a ligand contact to Zn(2+). The active site involves Glu198. His201 is a Zn(2+) binding site. A disulfide bond links Cys233 and Cys260.

It belongs to the peptidase M43B family.

The protein resides in the secreted. In terms of biological role, secreted metalloproteinase that allows assimilation of proteinaceous substrates. The polypeptide is Extracellular metalloprotease MGG_08041 (Pyricularia oryzae (strain 70-15 / ATCC MYA-4617 / FGSC 8958) (Rice blast fungus)).